Consider the following 126-residue polypeptide: Large ribosomal subunit protein uL24 (126 aa).

Residues 1–23 (MKFSRDVTSSRRKQRKAHFGAPS) form a disordered region.

Belongs to the universal ribosomal protein uL24 family. In terms of assembly, component of the large ribosomal subunit (LSU). Mature yeast ribosomes consist of a small (40S) and a large (60S) subunit. The 40S small subunit contains 1 molecule of ribosomal RNA (18S rRNA) and at least 33 different proteins. The large 60S subunit contains 3 rRNA molecules (25S, 5.8S and 5S rRNA) and at least 46 different proteins.

Its subcellular location is the cytoplasm. The protein localises to the nucleus. It localises to the nucleolus. Functionally, component of the ribosome, a large ribonucleoprotein complex responsible for the synthesis of proteins in the cell. The small ribosomal subunit (SSU) binds messenger RNAs (mRNAs) and translates the encoded message by selecting cognate aminoacyl-transfer RNA (tRNA) molecules. The large subunit (LSU) contains the ribosomal catalytic site termed the peptidyl transferase center (PTC), which catalyzes the formation of peptide bonds, thereby polymerizing the amino acids delivered by tRNAs into a polypeptide chain. The nascent polypeptides leave the ribosome through a tunnel in the LSU and interact with protein factors that function in enzymatic processing, targeting, and the membrane insertion of nascent chains at the exit of the ribosomal tunnel. This Schizosaccharomyces pombe (strain 972 / ATCC 24843) (Fission yeast) protein is Large ribosomal subunit protein uL24 (rpl26).